Here is a 122-residue protein sequence, read N- to C-terminus: Large ribosomal subunit protein uL14 (122 aa).

This sequence belongs to the universal ribosomal protein uL14 family. In terms of assembly, part of the 50S ribosomal subunit. Forms a cluster with proteins L3 and L19. In the 70S ribosome, L14 and L19 interact and together make contacts with the 16S rRNA in bridges B5 and B8.

In terms of biological role, binds to 23S rRNA. Forms part of two intersubunit bridges in the 70S ribosome. This is Large ribosomal subunit protein uL14 from Gluconobacter oxydans (strain 621H) (Gluconobacter suboxydans).